A 352-amino-acid polypeptide reads, in one-letter code: C-C chemokine receptor type 5 (352 aa).

At 1-30 (MDYQVSSPTYDIDYYTSEPCQKVNVKQIAA) the chain is on the extracellular side. Y3 is modified (sulfotyrosine). O-linked (GalNAc...) serine glycosylation is found at S6 and S7. 3 positions are modified to sulfotyrosine: Y10, Y14, and Y15. Intrachain disulfides connect C20–C269 and C101–C178. A helical transmembrane segment spans residues 31 to 58 (RLLPPLYSLVFIFGFVGNILVVLILINC). At 59–68 (KRLKSMTDIY) the chain is on the cytoplasmic side. Residues 69 to 89 (LLNLAISDLFFLLTVPFWAHY) traverse the membrane as a helical segment. Over 90–102 (AAAQWDFGNTMCQ) the chain is Extracellular. Residues 103–124 (LLTGLYFIGFFSGIFFIILLTI) traverse the membrane as a helical segment. The Cytoplasmic portion of the chain corresponds to 125–141 (DRYLAIVHAVFALKART). The helical transmembrane segment at 142–166 (VTFGVVTSVITWVVAVFASLPGIIF) threads the bilayer. Topologically, residues 167 to 198 (TRSQREGVHYTCSSHFPYSQYQFWKNFQTLKI) are extracellular. Residues 199–218 (VILGLVLPLLVMVICYSGIL) form a helical membrane-spanning segment. Over 219–235 (KTLLRCRNEKKRHRAVR) the chain is Cytoplasmic. The helical transmembrane segment at 236–260 (LIFTIMIVYFLFWAPYNIVLLLNTF) threads the bilayer. The Extracellular segment spans residues 261 to 277 (QEFFGLNNCSSSNRLDQ). A helical transmembrane segment spans residues 278–301 (AMQVTETLGMTHCCINPIIYAFVG). Residues 302-352 (EKFRNYLLVFFQKHIAKRFCKCCSIFQQEAPERASSVYTRSTGEQETSVGL) are Cytoplasmic-facing. 3 S-palmitoyl cysteine lipidation sites follow: C321, C323, and C324. 4 positions are modified to phosphoserine; by BARK1: S336, S337, S342, and S349.

This sequence belongs to the G-protein coupled receptor 1 family. In terms of assembly, interacts with PRAF2. Efficient ligand binding to CCL3/MIP-1alpha and CCL4/MIP-1beta requires sulfation, O-glycosylation and sialic acid modifications. Glycosylation on Ser-6 is required for efficient binding of CCL4. Interacts with GRK2. Interacts with ARRB1 and ARRB2. Interacts with CNIH4. Interacts with S100A4; this interaction stimulates T-lymphocyte chemotaxis. Post-translationally, sulfated on at least 2 of the N-terminal tyrosines. Sulfation is required for efficient binding of the chemokines, CCL3 and CCL4. In terms of processing, palmitoylation in the C-terminal is important for cell surface expression. Phosphorylation on serine residues in the C-terminal is stimulated by binding CC chemokines especially by APO-RANTES. Post-translationally, O-glycosylated, but not N-glycosylated. Ser-6 appears to be the major site even if Ser-7 may be also O-glycosylated. Also sialylated glycans present which contribute to chemokine binding. Thr-16 and Ser-17 may also be glycosylated and, if so, with small moieties such as a T-antigen.

The protein localises to the cell membrane. Receptor for a number of inflammatory CC-chemokines including CCL3/MIP-1-alpha, CCL4/MIP-1-beta and RANTES and subsequently transduces a signal by increasing the intracellular calcium ion level. May play a role in the control of granulocytic lineage proliferation or differentiation. Participates in T-lymphocyte migration to the infection site by acting as a chemotactic receptor. The sequence is that of C-C chemokine receptor type 5 (CCR5) from Rhinopithecus avunculus (Tonkin snub-nosed monkey).